A 392-amino-acid chain; its full sequence is Elongation factor Tu (392 aa).

Residues 10-202 (KVHVNVGTIG…VLDEYIEDPI (193 aa)) enclose the tr-type G domain. Positions 19–26 (GHVDHGKT) are G1. Position 19–26 (19–26 (GHVDHGKT)) interacts with GTP. Mg(2+) is bound at residue Thr-26. The interval 60–64 (GITIN) is G2. The segment at 81-84 (DCPG) is G3. GTP contacts are provided by residues 81–85 (DCPGH) and 136–139 (NKCD). The tract at residues 136–139 (NKCD) is G4. A G5 region spans residues 174-176 (SAL).

The protein belongs to the TRAFAC class translation factor GTPase superfamily. Classic translation factor GTPase family. EF-Tu/EF-1A subfamily. Monomer.

It localises to the cytoplasm. It catalyses the reaction GTP + H2O = GDP + phosphate + H(+). GTP hydrolase that promotes the GTP-dependent binding of aminoacyl-tRNA to the A-site of ribosomes during protein biosynthesis. This chain is Elongation factor Tu, found in Apple proliferation phytoplasma.